The primary structure comprises 1436 residues: Gag-Pol polyprotein (1436 aa).

Glycine 2 carries N-myristoyl glycine; by host lipidation. An interaction with Gp41 region spans residues 7-31 (VLSGGKLDKWEKIRLRPRGKKRYKL). Residues 8–43 (LSGGKLDKWEKIRLRPRGKKRYKLKHIVWASRELER) form an interaction with host CALM1 region. The interval 12–19 (KLDKWEKI) is interaction with host AP3D1. The tract at residues 14–33 (DKWEKIRLRPRGKKRYKLKH) is interaction with membrane phosphatidylinositol 4,5-bisphosphate and RNA. Residues 16–22 (WEKIRLR) carry the Nuclear export signal motif. A Nuclear localization signal motif is present at residues 26–32 (KKRYKLK). An interaction with membrane phosphatidylinositol 4,5-bisphosphate region spans residues 73–77 (EELKS). The interval 106–128 (EEQNKSKKKAQQAAADTGNGSQV) is disordered. Tyrosine 132 carries the phosphotyrosine; by host modification. The tract at residues 189 to 227 (NTVGGHQAAMQMLKETINEEAAEWDRLHPVHAGPIAPGQ) is interaction with human PPIA/CYPA and NUP153. The interval 277–363 (YSPISILDIR…GGPSHKARIL (87 aa)) is dimerization/Multimerization of capsid protein p24. 2 consecutive CCHC-type zinc fingers follow at residues 390-407 (VKCFNCGKVGHIAKNCRA) and 411-428 (KGCWKCGKEGHQMKDCTN). A disordered region spans residues 446–465 (KARELSSEQTRANSPTRREL). Residues 490–494 (PQITL) form a dimerization of protease region. A Peptidase A2 domain is found at 509 to 578 (KEALLDTGAD…TPVNIIGRNL (70 aa)). Aspartate 514 acts as the For protease activity; shared with dimeric partner in catalysis. Dimerization of protease stretches follow at residues 538–544 (GIGGFIK) and 577–589 (NLLTQIGCTLNFP). Residues 632–822 (EGKISKIGPE…PPFLWMGYEL (191 aa)) form the Reverse transcriptase domain. Residues aspartate 698, aspartate 773, and aspartate 774 each coordinate Mg(2+). The interval 815–823 (FLWMGYELH) is RT 'primer grip'. Positions 986–1002 (WEAWWTEYWQATWIPEW) match the Tryptophan repeat motif motif. Positions 1022–1145 (IIGAETFYVD…VDRLVSTGIR (124 aa)) constitute an RNase H type-1 domain. Residues aspartate 1031, glutamate 1066, aspartate 1086, and aspartate 1137 each contribute to the Mg(2+) site. The Integrase-type zinc finger occupies 1151–1192 (DGIDKAQDEHEKYHSNWRAMASDFNLPPVVAKEIVASCDKCQ). 4 residues coordinate Zn(2+): histidine 1160, histidine 1164, cysteine 1188, and cysteine 1191. The 151-residue stretch at 1202–1352 (VDCSPGIWQL…SAGERIVDII (151 aa)) folds into the Integrase catalytic domain. Positions 1212, 1264, and 1300 each coordinate Mg(2+). The integrase-type DNA-binding region spans 1371–1418 (FRVYYRDSRDPLWKGHAKLLWKGEGAVVIQDNSDIKVVPRRKAKIIRD).

As to quaternary structure, homotrimer; further assembles as hexamers of trimers. Interacts with gp41 (via C-terminus). Interacts with host CALM1; this interaction induces a conformational change in the Matrix protein, triggering exposure of the myristate group. Interacts with host AP3D1; this interaction allows the polyprotein trafficking to multivesicular bodies during virus assembly. Part of the pre-integration complex (PIC) which is composed of viral genome, matrix protein, Vpr and integrase. Homodimer; the homodimer further multimerizes as homohexamers or homopentamers. Interacts with human PPIA/CYPA; This interaction stabilizes the capsid. Interacts with human NUP153. Interacts with host PDZD8; this interaction stabilizes the capsid. Interacts with monkey TRIM5; this interaction destabilizes the capsid. In terms of assembly, homodimer, whose active site consists of two apposed aspartic acid residues. As to quaternary structure, heterodimer of p66 RT and p51 RT (RT p66/p51). Heterodimerization of RT is essential for DNA polymerase activity. The overall folding of the subdomains is similar in p66 RT and p51 RT but the spatial arrangements of the subdomains are dramatically different. Homotetramer; may further associate as a homohexadecamer. Part of the pre-integration complex (PIC) which is composed of viral genome, matrix protein, Vpr and integrase. Interacts with human SMARCB1/INI1 and human PSIP1/LEDGF isoform 1. Interacts with human KPNA3; this interaction might play a role in nuclear import of the pre-integration complex. Interacts with human NUP153; this interaction might play a role in nuclear import of the pre-integration complex. It depends on Mg(2+) as a cofactor. Post-translationally, specific enzymatic cleavages by the viral protease yield mature proteins. The protease is released by autocatalytic cleavage. The polyprotein is cleaved during and after budding, this process is termed maturation. Proteolytic cleavage of p66 RT removes the RNase H domain to yield the p51 RT subunit. Nucleocapsid protein p7 might be further cleaved after virus entry. In terms of processing, tyrosine phosphorylated presumably in the virion by a host kinase. Phosphorylation is apparently not a major regulator of membrane association. Phosphorylated possibly by host MAPK1; this phosphorylation is necessary for Pin1-mediated virion uncoating. Post-translationally, methylated by host PRMT6, impairing its function by reducing RNA annealing and the initiation of reverse transcription.

The protein resides in the host cell membrane. The protein localises to the host endosome. Its subcellular location is the host multivesicular body. It localises to the virion membrane. It is found in the host nucleus. The protein resides in the host cytoplasm. The protein localises to the virion. It catalyses the reaction Specific for a P1 residue that is hydrophobic, and P1' variable, but often Pro.. The catalysed reaction is Endohydrolysis of RNA in RNA/DNA hybrids. Three different cleavage modes: 1. sequence-specific internal cleavage of RNA. Human immunodeficiency virus type 1 and Moloney murine leukemia virus enzymes prefer to cleave the RNA strand one nucleotide away from the RNA-DNA junction. 2. RNA 5'-end directed cleavage 13-19 nucleotides from the RNA end. 3. DNA 3'-end directed cleavage 15-20 nucleotides away from the primer terminus.. The enzyme catalyses 3'-end directed exonucleolytic cleavage of viral RNA-DNA hybrid.. It carries out the reaction DNA(n) + a 2'-deoxyribonucleoside 5'-triphosphate = DNA(n+1) + diphosphate. Its activity is regulated as follows. Protease: The viral protease is inhibited by many synthetic protease inhibitors (PIs), such as amprenavir, atazanavir, indinavir, loprinavir, nelfinavir, ritonavir and saquinavir. Use of protease inhibitors in tritherapy regimens permit more ambitious therapeutic strategies. Reverse transcriptase/ribonuclease H: RT can be inhibited either by nucleoside RT inhibitors (NRTIs) or by non nucleoside RT inhibitors (NNRTIs). NRTIs act as chain terminators, whereas NNRTIs inhibit DNA polymerization by binding a small hydrophobic pocket near the RT active site and inducing an allosteric change in this region. Classical NRTIs are abacavir, adefovir (PMEA), didanosine (ddI), lamivudine (3TC), stavudine (d4T), tenofovir (PMPA), zalcitabine (ddC), and zidovudine (AZT). Classical NNRTIs are atevirdine (BHAP U-87201E), delavirdine, efavirenz (DMP-266), emivirine (I-EBU), and nevirapine (BI-RG-587). The tritherapies used as a basic effective treatment of AIDS associate two NRTIs and one NNRTI. Functionally, mediates, with Gag polyprotein, the essential events in virion assembly, including binding the plasma membrane, making the protein-protein interactions necessary to create spherical particles, recruiting the viral Env proteins, and packaging the genomic RNA via direct interactions with the RNA packaging sequence (Psi). Gag-Pol polyprotein may regulate its own translation, by the binding genomic RNA in the 5'-UTR. At low concentration, the polyprotein would promote translation, whereas at high concentration, the polyprotein would encapsidate genomic RNA and then shut off translation. Its function is as follows. Targets the polyprotein to the plasma membrane via a multipartite membrane-binding signal, that includes its myristoylated N-terminus. Matrix protein is part of the pre-integration complex. Implicated in the release from host cell mediated by Vpu. Binds to RNA. In terms of biological role, forms the conical core that encapsulates the genomic RNA-nucleocapsid complex in the virion. Most core are conical, with only 7% tubular. The core is constituted by capsid protein hexamer subunits. The core is disassembled soon after virion entry. Host restriction factors such as TRIM5-alpha or TRIMCyp bind retroviral capsids and cause premature capsid disassembly, leading to blocks in reverse transcription. Capsid restriction by TRIM5 is one of the factors which restricts HIV-1 to the human species. Host PIN1 apparently facilitates the virion uncoating. On the other hand, interactions with PDZD8 or CYPA stabilize the capsid. Encapsulates and protects viral dimeric unspliced genomic RNA (gRNA). Binds these RNAs through its zinc fingers. Acts as a nucleic acid chaperone which is involved in rearangement of nucleic acid secondary structure during gRNA retrotranscription. Also facilitates template switch leading to recombination. As part of the polyprotein, participates in gRNA dimerization, packaging, tRNA incorporation and virion assembly. Functionally, aspartyl protease that mediates proteolytic cleavages of Gag and Gag-Pol polyproteins during or shortly after the release of the virion from the plasma membrane. Cleavages take place as an ordered, step-wise cascade to yield mature proteins. This process is called maturation. Displays maximal activity during the budding process just prior to particle release from the cell. Also cleaves Nef and Vif, probably concomitantly with viral structural proteins on maturation of virus particles. Hydrolyzes host EIF4GI and PABP1 in order to shut off the capped cellular mRNA translation. The resulting inhibition of cellular protein synthesis serves to ensure maximal viral gene expression and to evade host immune response. Also mediates cleavage of host YTHDF3. Mediates cleavage of host CARD8, thereby activating the CARD8 inflammasome, leading to the clearance of latent HIV-1 in patient CD4(+) T-cells after viral reactivation; in contrast, HIV-1 can evade CARD8-sensing when its protease remains inactive in infected cells prior to viral budding. Its function is as follows. Multifunctional enzyme that converts the viral RNA genome into dsDNA in the cytoplasm, shortly after virus entry into the cell. This enzyme displays a DNA polymerase activity that can copy either DNA or RNA templates, and a ribonuclease H (RNase H) activity that cleaves the RNA strand of RNA-DNA heteroduplexes in a partially processive 3' to 5' endonucleasic mode. Conversion of viral genomic RNA into dsDNA requires many steps. A tRNA(3)-Lys binds to the primer-binding site (PBS) situated at the 5'-end of the viral RNA. RT uses the 3' end of the tRNA primer to perform a short round of RNA-dependent minus-strand DNA synthesis. The reading proceeds through the U5 region and ends after the repeated (R) region which is present at both ends of viral RNA. The portion of the RNA-DNA heteroduplex is digested by the RNase H, resulting in a ssDNA product attached to the tRNA primer. This ssDNA/tRNA hybridizes with the identical R region situated at the 3' end of viral RNA. This template exchange, known as minus-strand DNA strong stop transfer, can be either intra- or intermolecular. RT uses the 3' end of this newly synthesized short ssDNA to perform the RNA-dependent minus-strand DNA synthesis of the whole template. RNase H digests the RNA template except for two polypurine tracts (PPTs) situated at the 5'-end and near the center of the genome. It is not clear if both polymerase and RNase H activities are simultaneous. RNase H probably can proceed both in a polymerase-dependent (RNA cut into small fragments by the same RT performing DNA synthesis) and a polymerase-independent mode (cleavage of remaining RNA fragments by free RTs). Secondly, RT performs DNA-directed plus-strand DNA synthesis using the PPTs that have not been removed by RNase H as primers. PPTs and tRNA primers are then removed by RNase H. The 3' and 5' ssDNA PBS regions hybridize to form a circular dsDNA intermediate. Strand displacement synthesis by RT to the PBS and PPT ends produces a blunt ended, linear dsDNA copy of the viral genome that includes long terminal repeats (LTRs) at both ends. In terms of biological role, catalyzes viral DNA integration into the host chromosome, by performing a series of DNA cutting and joining reactions. This enzyme activity takes place after virion entry into a cell and reverse transcription of the RNA genome in dsDNA. The first step in the integration process is 3' processing. This step requires a complex comprising the viral genome, matrix protein, Vpr and integrase. This complex is called the pre-integration complex (PIC). The integrase protein removes 2 nucleotides from each 3' end of the viral DNA, leaving recessed CA OH's at the 3' ends. In the second step, the PIC enters cell nucleus. This process is mediated through integrase and Vpr proteins, and allows the virus to infect a non dividing cell. This ability to enter the nucleus is specific of lentiviruses, other retroviruses cannot and rely on cell division to access cell chromosomes. In the third step, termed strand transfer, the integrase protein joins the previously processed 3' ends to the 5' ends of strands of target cellular DNA at the site of integration. The 5'-ends are produced by integrase-catalyzed staggered cuts, 5 bp apart. A Y-shaped, gapped, recombination intermediate results, with the 5'-ends of the viral DNA strands and the 3' ends of target DNA strands remaining unjoined, flanking a gap of 5 bp. The last step is viral DNA integration into host chromosome. This involves host DNA repair synthesis in which the 5 bp gaps between the unjoined strands are filled in and then ligated. Since this process occurs at both cuts flanking the HIV genome, a 5 bp duplication of host DNA is produced at the ends of HIV-1 integration. Alternatively, Integrase may catalyze the excision of viral DNA just after strand transfer, this is termed disintegration. In Human immunodeficiency virus type 1 group M subtype B (isolate RF/HAT3) (HIV-1), this protein is Gag-Pol polyprotein (gag-pol).